A 172-amino-acid chain; its full sequence is Secretory-abundant heat soluble protein 64681 (172 aa).

The first 19 residues, Met1–Ala19, serve as a signal peptide directing secretion. Residues Glu30 to Pro59 form an SAHS-c1 region. The tract at residues Trp74–Glu102 is SAHS-c2. N-linked (GlcNAc...) asparagine glycosylation is found at Asn108 and Asn133. The segment at Lys115–Lys164 is SAHS-c3.

The protein belongs to the Secretory-abundant heat soluble protein (SAHS) family.

It localises to the secreted. Secreted heat soluble protein acting as a molecular shield in water-deficient condition. Tardigrade-specific intrinsically disordered proteins (TDPs) are essential for desiccation tolerance by forming non-crystalline amorphous solids upon desiccation, and this vitrified state mirrors their protective capabilities. In Hypsibius exemplaris (Freshwater tardigrade), this protein is Secretory-abundant heat soluble protein 64681.